The sequence spans 649 residues: Echinoderm microtubule-associated protein-like 2 (649 aa).

The tract at residues 10–649 (KEVIFSMEEG…DTSVLQWRVA (640 aa)) is tandem atypical propeller in EMLs. WD repeat units lie at residues 56–93 (KLDW…LYSV), 97–144 (RQRH…VWDS), 151–192 (HVLG…VWDW), 195–234 (ESKV…FWSL), 241–280 (KRQG…VWGK), 285–323 (ITQE…LWGS), 369–406 (FSLL…LWSS), 410–447 (QPVW…LLDT), 452–489 (LVAI…VYTV), 495–535 (KVSR…YWDA), 564–602 (FGIW…LFSY), and 609–648 (ALSH…QWRV).

It belongs to the WD repeat EMAP family. In terms of assembly, interacts with GRID2 and may also interact with GRID1. Interacts with EML3. Binds unpolymerized tubulins via its WD repeat region. As to expression, widely expressed in both brain and peripheral tissues, including brainstem and enrichment in the postsynaptic density, PSD.

The protein resides in the cytoplasm. It is found in the cytoskeleton. The protein localises to the spindle. Its function is as follows. Tubulin binding protein that inhibits microtubule nucleation and growth, resulting in shorter microtubules. The sequence is that of Echinoderm microtubule-associated protein-like 2 (Eml2) from Rattus norvegicus (Rat).